Here is a 243-residue protein sequence, read N- to C-terminus: Ice-binding protein K1-A (243 aa).

An N-terminal signal peptide occupies residues 1-20 (MFSSTYLLAIIALAVSSVFA).

Belongs to the ice-binding protein family.

It is found in the secreted. Binds to the surface of ice crystals. Inhibits growth of the ice crystals. Has antifreeze activity for survival under snow cover. Has high thermal hysteresis (TH) activity, which is the ability to lower the freezing point of an aqueous solution below its melting point, and thus the freezing of the cell fluid can be prevented protecting the organism from ice damage. The TH activity of this protein is 2.0 degrees Celsius at 0.11 mM. The chain is Ice-binding protein K1-A from Typhula ishikariensis (Gray snow mold fungus).